Consider the following 385-residue polypeptide: Succinate--CoA ligase [ADP-forming] subunit beta (385 aa).

The ATP-grasp domain occupies 9–244; the sequence is KEILRKYGVP…QDEEDPLETR (236 aa). Residues lysine 46, 53 to 55, glutamate 99, cysteine 102, and glutamate 107 contribute to the ATP site; that span reads GRG. Mg(2+) contacts are provided by asparagine 199 and aspartate 213. Substrate is bound by residues asparagine 264 and 321–323; that span reads GIM.

The protein belongs to the succinate/malate CoA ligase beta subunit family. In terms of assembly, heterotetramer of two alpha and two beta subunits. Mg(2+) is required as a cofactor.

It carries out the reaction succinate + ATP + CoA = succinyl-CoA + ADP + phosphate. It catalyses the reaction GTP + succinate + CoA = succinyl-CoA + GDP + phosphate. Its pathway is carbohydrate metabolism; tricarboxylic acid cycle; succinate from succinyl-CoA (ligase route): step 1/1. In terms of biological role, succinyl-CoA synthetase functions in the citric acid cycle (TCA), coupling the hydrolysis of succinyl-CoA to the synthesis of either ATP or GTP and thus represents the only step of substrate-level phosphorylation in the TCA. The beta subunit provides nucleotide specificity of the enzyme and binds the substrate succinate, while the binding sites for coenzyme A and phosphate are found in the alpha subunit. This Rickettsia bellii (strain RML369-C) protein is Succinate--CoA ligase [ADP-forming] subunit beta.